The following is a 151-amino-acid chain: 3-hydroxyacyl-[acyl-carrier-protein] dehydratase FabZ (151 aa).

Residue His49 is part of the active site.

Belongs to the thioester dehydratase family. FabZ subfamily.

The protein localises to the cytoplasm. It catalyses the reaction a (3R)-hydroxyacyl-[ACP] = a (2E)-enoyl-[ACP] + H2O. In terms of biological role, involved in unsaturated fatty acids biosynthesis. Catalyzes the dehydration of short chain beta-hydroxyacyl-ACPs and long chain saturated and unsaturated beta-hydroxyacyl-ACPs. The polypeptide is 3-hydroxyacyl-[acyl-carrier-protein] dehydratase FabZ (Bordetella bronchiseptica (strain ATCC BAA-588 / NCTC 13252 / RB50) (Alcaligenes bronchisepticus)).